Reading from the N-terminus, the 413-residue chain is Peptidase T (413 aa).

A Zn(2+)-binding site is contributed by H84. D86 is an active-site residue. Residue D146 coordinates Zn(2+). The Proton acceptor role is filled by E180. The Zn(2+) site is built by E181, D203, and H385.

Belongs to the peptidase M20B family. Zn(2+) serves as cofactor.

The protein resides in the cytoplasm. It carries out the reaction Release of the N-terminal residue from a tripeptide.. Its function is as follows. Cleaves the N-terminal amino acid of tripeptides. This Limosilactobacillus fermentum (strain NBRC 3956 / LMG 18251) (Lactobacillus fermentum) protein is Peptidase T.